A 347-amino-acid polypeptide reads, in one-letter code: uncharacterized protein (347 aa).

Residues Asp207, Asp218, His279, Glu312, and Glu326 each contribute to the Mn(2+) site.

This sequence belongs to the peptidase M24B family. It depends on Mn(2+) as a cofactor.

This is an uncharacterized protein from Methanocaldococcus jannaschii (strain ATCC 43067 / DSM 2661 / JAL-1 / JCM 10045 / NBRC 100440) (Methanococcus jannaschii).